Consider the following 97-residue polypeptide: Co-chaperonin GroES (97 aa).

This sequence belongs to the GroES chaperonin family. Heptamer of 7 subunits arranged in a ring. Interacts with the chaperonin GroEL.

It localises to the cytoplasm. Its function is as follows. Together with the chaperonin GroEL, plays an essential role in assisting protein folding. The GroEL-GroES system forms a nano-cage that allows encapsulation of the non-native substrate proteins and provides a physical environment optimized to promote and accelerate protein folding. GroES binds to the apical surface of the GroEL ring, thereby capping the opening of the GroEL channel. This chain is Co-chaperonin GroES, found in Pectobacterium atrosepticum (strain SCRI 1043 / ATCC BAA-672) (Erwinia carotovora subsp. atroseptica).